The sequence spans 405 residues: 4-hydroxy-3-methylbut-2-enyl diphosphate reductase (405 aa).

Residue Cys66 participates in [4Fe-4S] cluster binding. A (2E)-4-hydroxy-3-methylbut-2-enyl diphosphate-binding site is contributed by His96. A dimethylallyl diphosphate-binding site is contributed by His96. His96 is a binding site for isopentenyl diphosphate. Position 157 (Cys157) interacts with [4Fe-4S] cluster. (2E)-4-hydroxy-3-methylbut-2-enyl diphosphate is bound at residue His185. His185 contributes to the dimethylallyl diphosphate binding site. His185 is a binding site for isopentenyl diphosphate. Glu187 functions as the Proton donor in the catalytic mechanism. (2E)-4-hydroxy-3-methylbut-2-enyl diphosphate is bound at residue Thr250. Cys288 is a [4Fe-4S] cluster binding site. Residues Ser317, Ser318, Asn319, and Ser380 each coordinate (2E)-4-hydroxy-3-methylbut-2-enyl diphosphate. 4 residues coordinate dimethylallyl diphosphate: Ser317, Ser318, Asn319, and Ser380. Isopentenyl diphosphate contacts are provided by Ser317, Ser318, Asn319, and Ser380.

This sequence belongs to the IspH family. [4Fe-4S] cluster is required as a cofactor.

The enzyme catalyses isopentenyl diphosphate + 2 oxidized [2Fe-2S]-[ferredoxin] + H2O = (2E)-4-hydroxy-3-methylbut-2-enyl diphosphate + 2 reduced [2Fe-2S]-[ferredoxin] + 2 H(+). It carries out the reaction dimethylallyl diphosphate + 2 oxidized [2Fe-2S]-[ferredoxin] + H2O = (2E)-4-hydroxy-3-methylbut-2-enyl diphosphate + 2 reduced [2Fe-2S]-[ferredoxin] + 2 H(+). Its pathway is isoprenoid biosynthesis; dimethylallyl diphosphate biosynthesis; dimethylallyl diphosphate from (2E)-4-hydroxy-3-methylbutenyl diphosphate: step 1/1. It functions in the pathway isoprenoid biosynthesis; isopentenyl diphosphate biosynthesis via DXP pathway; isopentenyl diphosphate from 1-deoxy-D-xylulose 5-phosphate: step 6/6. Functionally, catalyzes the conversion of 1-hydroxy-2-methyl-2-(E)-butenyl 4-diphosphate (HMBPP) into a mixture of isopentenyl diphosphate (IPP) and dimethylallyl diphosphate (DMAPP). Acts in the terminal step of the DOXP/MEP pathway for isoprenoid precursor biosynthesis. This chain is 4-hydroxy-3-methylbut-2-enyl diphosphate reductase, found in Prochlorococcus marinus (strain SARG / CCMP1375 / SS120).